A 441-amino-acid chain; its full sequence is 23S rRNA (uracil(1939)-C(5))-methyltransferase RlmD (441 aa).

Residues 10 to 68 (KPLKQQSLVLDITAMDHHGRGIAKHNNKVCFVSNALPNEQVKATIIADKARYSEAQTHK) enclose the TRAM domain. Residues Cys81, Cys87, Cys90, and Cys169 each coordinate [4Fe-4S] cluster. S-adenosyl-L-methionine is bound by residues Gln274, Phe303, Asn308, Glu324, Asp351, and Asp372. Cys398 functions as the Nucleophile in the catalytic mechanism.

Belongs to the class I-like SAM-binding methyltransferase superfamily. RNA M5U methyltransferase family. RlmD subfamily.

The catalysed reaction is uridine(1939) in 23S rRNA + S-adenosyl-L-methionine = 5-methyluridine(1939) in 23S rRNA + S-adenosyl-L-homocysteine + H(+). Functionally, catalyzes the formation of 5-methyl-uridine at position 1939 (m5U1939) in 23S rRNA. In Pseudoalteromonas translucida (strain TAC 125), this protein is 23S rRNA (uracil(1939)-C(5))-methyltransferase RlmD.